A 105-amino-acid chain; its full sequence is MNEFLSLLSRAQTILLMLRLAVTAVAVFLAIVAWTKTRTQETVCFIAGVLCMYLAQLFAFLRAAGFSITRYTPVPGVSLVGFTLELLPLACFIASLIFTIKRHSI.

The next 3 membrane-spanning stretches (helical) occupy residues 14–34 (ILLM…IVAW), 41–61 (ETVC…FAFL), and 80–100 (VGFT…IFTI).

The protein resides in the cell membrane. This is an uncharacterized protein from Treponema pallidum (strain Nichols).